The sequence spans 380 residues: Ceramide synthase 2 (380 aa).

Residues 1 to 40 are Lumenal-facing; that stretch reads MLQTLYDYFWWERLWLPVNLTWADLEDKDGRVYAKASDLY. N-linked (GlcNAc...) asparagine glycosylation is present at Asn-19. A helical membrane pass occupies residues 41 to 61; it reads ITLPLALLFLVIRYFFELYVA. Positions 67–128 are homeobox-like; the sequence is LLNVKEKTRL…RRRRNQDRPS (62 aa). Residues 131–332 enclose the TLC domain; it reads KKFREASWRF…ILRMAHKFIT (202 aa). The next 4 helical transmembrane spans lie at 140-160, 175-195, 209-229, and 264-284; these read FTYY…KPWF, IIPS…SLLF, QIIH…ANYV, and LFIV…PFWI. The Last loop motif signature appears at 291-300; that stretch reads YPLELYPAFF. The helical transmembrane segment at 304–324 threads the bilayer; that stretch reads FFNFMMAVLQMLHIFWAYFIL. Residues 325 to 380 are Cytoplasmic-facing; sequence RMAHKFITGKLIEDERSDREETESSEGEETAAGAGAKSRLLANGHPILNNNHPKND. The disordered stretch occupies residues 340-380; sequence RSDREETESSEGEETAAGAGAKSRLLANGHPILNNNHPKND. A Phosphoserine modification is found at Ser-341. Over residues 344-353 the composition is skewed to acidic residues; that stretch reads EETESSEGEE. Residue Thr-346 is modified to Phosphothreonine. A phosphoserine mark is found at Ser-348 and Ser-349.

As to quaternary structure, interacts with ATP6V0C, ASGR1, ASGR2 and SLC22A1/OCT1. Interacts with ELOV1, HSD17B12 and TECR. Interacts with NDUFS2. Interacts with PAQR4; the interaction regulates the stability and activity of CERS2 and is inhibited in presence of ceramides. Post-translationally, acetylated. Deacetylation by SIRT3 increases enzyme activity and promotes mitochondrial ceramide accumulation. Phosphorylated at the C-terminus by CK2, leading to increase the ceramide synthase activity. As to expression, broadly expressed, with highest levels in liver and kidney. In brain is detected in neurons, oligodentrocytes, ependymal cells and epithelial cells of the choroid plexus. In kidney is detected in collecting ducts and to a lesser degree in proximal tubules.

Its subcellular location is the endoplasmic reticulum membrane. The enzyme catalyses a very long-chain fatty acyl-CoA + a sphingoid base = an N-(very-long-chain fatty acyl)-sphingoid base + CoA + H(+). The catalysed reaction is docosanoyl-CoA + sphinganine = N-docosanoylsphinganine + CoA + H(+). It catalyses the reaction tetracosanoyl-CoA + sphinganine = N-tetracosanoylsphinganine + CoA + H(+). It carries out the reaction hexacosanoyl-CoA + sphinganine = N-hexacosanoylsphinganine + CoA + H(+). The enzyme catalyses (15Z)-tetracosenoyl-CoA + sphinganine = N-(15Z-tetracosenoyl)-sphinganine + CoA + H(+). The catalysed reaction is 2-hydroxytetracosanoyl-CoA + sphinganine = N-(2-hydroxytetracosanoyl)-sphinganine + CoA + H(+). It catalyses the reaction 2-hydroxydocosanoyl-CoA + sphinganine = N-(2-hydroxydocosanoyl)-sphinganine + CoA + H(+). It carries out the reaction 2-hydroxytetracosenoyl-CoA + sphinganine = N-(2-hydroxytetracosenoyl)-sphinganine + CoA + H(+). The enzyme catalyses tetracosenoyl-CoA + sphinganine = an N-tetracosenoylsphinganine + CoA + H(+). The catalysed reaction is hexacosenoyl-CoA + sphinganine = N-hexacosenoylsphinganine + CoA + H(+). It catalyses the reaction tetracosanoyl-CoA + sphing-4-enine = N-tetracosanoyl-sphing-4-enine + CoA + H(+). It carries out the reaction tetracosenoyl-CoA + sphing-4-enine = N-(tetracosenoyl)-sphing-4-enine + CoA + H(+). The enzyme catalyses heptadecasphing-4-enine + tetracosanoyl-CoA = N-tetracosanoyl-heptadecasphing-4-enine + CoA + H(+). The catalysed reaction is a fatty acyl-CoA + sphing-4-enine = an N-acylsphing-4-enine + CoA + H(+). It catalyses the reaction sphing-4-enine + hexadecanoyl-CoA = N-hexadecanoylsphing-4-enine + CoA + H(+). It carries out the reaction sphing-4-enine + octadecanoyl-CoA = N-octadecanoylsphing-4-enine + CoA + H(+). The enzyme catalyses eicosanoyl-CoA + sphing-4-enine = N-eicosanoyl-sphing-4-enine + CoA + H(+). The catalysed reaction is sphinganine + hexadecanoyl-CoA = N-hexadecanoylsphinganine + CoA + H(+). It catalyses the reaction sphinganine + octadecanoyl-CoA = N-(octadecanoyl)-sphinganine + CoA + H(+). It carries out the reaction sphinganine + (9Z)-octadecenoyl-CoA = N-(9Z-octadecenoyl)-sphinganine + CoA + H(+). The enzyme catalyses eicosanoyl-CoA + sphinganine = N-eicosanoylsphinganine + CoA + H(+). It functions in the pathway lipid metabolism; sphingolipid metabolism. With respect to regulation, ceramide synthase activity is inhibited by sphingosine-1-phosphate. Its function is as follows. Ceramide synthase that catalyzes the transfer of the acyl chain from acyl-CoA to a sphingoid base, with high selectivity toward very-long-chain fatty acyl-CoA (chain length C22-C27). N-acylates sphinganine and sphingosine bases to form dihydroceramides and ceramides in de novo synthesis and salvage pathways, respectively. Plays a non-redundant role in the synthesis of ceramides with very-long-chain fatty acids in kidney, liver and brain. Regulates the abundance of myelin-specific sphingolipids galactosylceramide and sulfatide that affects myelin sheath architecture and motor neuron functions. The protein is Ceramide synthase 2 of Mus musculus (Mouse).